A 317-amino-acid polypeptide reads, in one-letter code: Melanocyte-stimulating hormone receptor (317 aa).

Residues 1 to 37 (MPVQGSQRRLLGSLNSTPTATPHLGLAANQTGAWCLE) lie on the Extracellular side of the membrane. A glycan (N-linked (GlcNAc...) asparagine) is linked at N29. Residues 38–63 (VSIPDGLFLSLGLVSLVENVLVVTAI) form a helical membrane-spanning segment. The Cytoplasmic portion of the chain corresponds to 64 to 72 (AKNRNLHSP). A helical transmembrane segment spans residues 73-93 (MYCFICCLALSDLLVSGSNML). Topologically, residues 94 to 118 (ETAVTLLLEAGALAARAAVVQQLDN) are extracellular. A helical membrane pass occupies residues 119 to 140 (VIDVITCSSMLSSLCFLGAIAV). The Cytoplasmic segment spans residues 141-163 (DRYISIFYALRYHSIVTLPRARR). A helical transmembrane segment spans residues 164–183 (AVAAIWVASVLFSMLFIAYY). Residues 184 to 191 (DHAAVLLC) are Extracellular-facing. Residues 192-211 (LVVFFLAMLVLMAVLYVHML) traverse the membrane as a helical segment. Topologically, residues 212 to 240 (ARACQHAQGIARLHKRQRPAHQGFGLKGA) are cytoplasmic. Residues 241 to 266 (ATLTILLGIFFLCWGPFFLHLTLIVL) form a helical membrane-spanning segment. The Extracellular portion of the chain corresponds to 267 to 279 (CPQHPTCSCIFKN). The chain crosses the membrane as a helical span at residues 280–300 (FNLFLALIICNAIIDPLIYAF). Over 301–317 (RSQELRRTLKEVLLCSW) the chain is Cytoplasmic. The S-palmitoyl cysteine moiety is linked to residue C315.

It belongs to the G-protein coupled receptor 1 family. Interacts with MGRN1, but does not undergo MGRN1-mediated ubiquitination; this interaction competes with GNAS-binding and thus inhibits agonist-induced cAMP production. Interacts with OPN3; the interaction results in a decrease in MC1R-mediated cAMP signaling and ultimately a decrease in melanin production in melanocytes.

The protein resides in the cell membrane. Functionally, receptor for MSH (alpha, beta and gamma) and ACTH. The activity of this receptor is mediated by G proteins which activate adenylate cyclase. Mediates melanogenesis, the production of eumelanin (black/brown) and phaeomelanin (red/yellow), via regulation of cAMP signaling in melanocytes. The chain is Melanocyte-stimulating hormone receptor (MC1R) from Allenopithecus nigroviridis (Allen's swamp monkey).